The following is a 105-amino-acid chain: Transcription factor S (105 aa).

Zn(2+)-binding residues include C5, C8, C21, C24, C66, C69, C94, and C97. The C4-type zinc-finger motif lies at 5 to 24; that stretch reads CPKCNNIMLPKNGRLKCTVC. The segment at 62–102 adopts a TFIIS-type zinc-finger fold; sequence TRIECPSCGNMEASWWLQQTRCADEPETRFYKCKKCGHTWR.

It belongs to the archaeal RpoM/eukaryotic RPA12/RPB9/RPC11 RNA polymerase family.

Induces RNA cleavage activity in the RNA polymerase. In its presence, the cleavage activity of the RNA polymerase truncates the RNA back to position +15 in a stepwise manner by releasing mainly dinucleotides from the 3'-end of the nascent RNA. The truncated RNAs are able to continue elongation. Involved in transcriptional proofreading and fidelity. Misincorporation of nucleotides during elongation of transcription leads to arrested elongation complexes which are rescued by TFS-promoted removal of a dinucleotide from the 3'-end. TFS is able to induce a cleavage resynthesis cycle in stalled elongation complexes (resulting from the next missing nucleotide or a reduced incorporation rate of a wrong nucleotide) preventing misincorporation and enabling proofreading in a post-incorporation manner. Pausing of elongation complexes is the main determinant of TFS-induced RNA cleavage. This chain is Transcription factor S, found in Methanothermococcus thermolithotrophicus (Methanococcus thermolithotrophicus).